The chain runs to 129 residues: M-zodatoxin-Lt8i (129 aa).

The signal sequence occupies residues 1–20; sequence MKYFVVALALVAAFACIAES. A propeptide spanning residues 21-60 is cleaved from the precursor; it reads KPAESEHELAEVEEENELADLEDAVWLEHLADLSDLEEAR.

This sequence belongs to the cationic peptide 06 (cytoinsectotoxin) family. In terms of tissue distribution, expressed by the venom gland.

Its subcellular location is the secreted. In terms of biological role, insecticidal, cytolytic and antimicrobial peptide. Forms voltage-dependent, ion-permeable channels in membranes. At high concentration causes cell membrane lysis. The chain is M-zodatoxin-Lt8i (cit 1-6) from Lachesana tarabaevi (Spider).